The chain runs to 358 residues: DNA polymerase IV (358 aa).

A UmuC domain is found at 4–185 (IIHIDMDCYF…LSLRKIPGVG (182 aa)). Mg(2+) contacts are provided by aspartate 8 and aspartate 103. Glutamate 104 is an active-site residue.

Belongs to the DNA polymerase type-Y family. In terms of assembly, monomer. It depends on Mg(2+) as a cofactor.

The protein localises to the cytoplasm. It carries out the reaction DNA(n) + a 2'-deoxyribonucleoside 5'-triphosphate = DNA(n+1) + diphosphate. Its function is as follows. Poorly processive, error-prone DNA polymerase involved in untargeted mutagenesis. Copies undamaged DNA at stalled replication forks, which arise in vivo from mismatched or misaligned primer ends. These misaligned primers can be extended by PolIV. Exhibits no 3'-5' exonuclease (proofreading) activity. May be involved in translesional synthesis, in conjunction with the beta clamp from PolIII. This is DNA polymerase IV from Shewanella baltica (strain OS195).